The sequence spans 220 residues: Guanylate kinase (220 aa).

The Guanylate kinase-like domain maps to 15 to 194 (GLMLVISSPS…AFDAVQSIVK (180 aa)). 22 to 29 (SPSGAGKS) lines the ATP pocket.

The protein belongs to the guanylate kinase family.

The protein localises to the cytoplasm. The enzyme catalyses GMP + ATP = GDP + ADP. Essential for recycling GMP and indirectly, cGMP. The polypeptide is Guanylate kinase (Rhizobium etli (strain ATCC 51251 / DSM 11541 / JCM 21823 / NBRC 15573 / CFN 42)).